The sequence spans 22 residues: Fuctinin-2 (22 aa).

A disordered region spans residues 1–22; the sequence is ELPGLPKGEKEQQEAIEHIDEV. The span at 7–22 shows a compositional bias: basic and acidic residues; the sequence is KGEKEQQEAIEHIDEV.

It to human SET/PHAPII protein. As to quaternary structure, oligomer.

The protein localises to the cytoplasm. In terms of biological role, has a role in the physiological regulation of fucosylation processes. This chain is Fuctinin-2, found in Rattus norvegicus (Rat).